The sequence spans 190 residues: Isopentenyl-diphosphate Delta-isomerase (190 aa).

Mn(2+)-binding residues include histidine 27 and histidine 34. In terms of domain architecture, Nudix hydrolase spans proline 32–aspartate 171. Cysteine 69 is a catalytic residue. Cysteine 69 contacts Mg(2+). Histidine 71 contributes to the Mn(2+) binding site. A Mg(2+)-binding site is contributed by glutamate 89. Mn(2+) contacts are provided by glutamate 119 and glutamate 121. Glutamate 121 is an active-site residue.

The protein belongs to the IPP isomerase type 1 family. Mg(2+) is required as a cofactor. It depends on Mn(2+) as a cofactor.

It is found in the cytoplasm. The enzyme catalyses isopentenyl diphosphate = dimethylallyl diphosphate. It participates in isoprenoid biosynthesis; dimethylallyl diphosphate biosynthesis; dimethylallyl diphosphate from isopentenyl diphosphate: step 1/1. Its function is as follows. Catalyzes the 1,3-allylic rearrangement of the homoallylic substrate isopentenyl (IPP) to its highly electrophilic allylic isomer, dimethylallyl diphosphate (DMAPP). In Corynebacterium efficiens (strain DSM 44549 / YS-314 / AJ 12310 / JCM 11189 / NBRC 100395), this protein is Isopentenyl-diphosphate Delta-isomerase.